Reading from the N-terminus, the 189-residue chain is Interferon alpha-B (189 aa).

Positions 1–23 (MAPAWSFLLALLLLSCNAICSLG) are cleaved as a signal peptide. 2 disulfide bridges follow: cysteine 24-cysteine 122 and cysteine 52-cysteine 162.

This sequence belongs to the alpha/beta interferon family.

It is found in the secreted. Produced by macrophages, IFN-alpha have antiviral activities. Interferon stimulates the production of two enzymes: a protein kinase and an oligoadenylate synthetase. In Bos taurus (Bovine), this protein is Interferon alpha-B (IFNAB).